The primary structure comprises 375 residues: 4-hydroxy-3-methylbut-2-en-1-yl diphosphate synthase (flavodoxin) (375 aa).

Positions 275, 278, 310, and 317 each coordinate [4Fe-4S] cluster.

Belongs to the IspG family. The cofactor is [4Fe-4S] cluster.

It catalyses the reaction (2E)-4-hydroxy-3-methylbut-2-enyl diphosphate + oxidized [flavodoxin] + H2O + 2 H(+) = 2-C-methyl-D-erythritol 2,4-cyclic diphosphate + reduced [flavodoxin]. It participates in isoprenoid biosynthesis; isopentenyl diphosphate biosynthesis via DXP pathway; isopentenyl diphosphate from 1-deoxy-D-xylulose 5-phosphate: step 5/6. Functionally, converts 2C-methyl-D-erythritol 2,4-cyclodiphosphate (ME-2,4cPP) into 1-hydroxy-2-methyl-2-(E)-butenyl 4-diphosphate. In Ruegeria pomeroyi (strain ATCC 700808 / DSM 15171 / DSS-3) (Silicibacter pomeroyi), this protein is 4-hydroxy-3-methylbut-2-en-1-yl diphosphate synthase (flavodoxin).